Consider the following 272-residue polypeptide: D-aminoacyl-tRNA deacylase (272 aa).

It belongs to the DtdA deacylase family. Monomer. It depends on Zn(2+) as a cofactor.

The enzyme catalyses a D-aminoacyl-tRNA + H2O = a tRNA + a D-alpha-amino acid + H(+). It catalyses the reaction glycyl-tRNA(Ala) + H2O = tRNA(Ala) + glycine + H(+). D-aminoacyl-tRNA deacylase with broad substrate specificity. By recycling D-aminoacyl-tRNA to D-amino acids and free tRNA molecules, this enzyme counteracts the toxicity associated with the formation of D-aminoacyl-tRNA entities in vivo. In Desulfurococcus amylolyticus (strain DSM 18924 / JCM 16383 / VKM B-2413 / 1221n) (Desulfurococcus kamchatkensis), this protein is D-aminoacyl-tRNA deacylase.